The following is a 312-amino-acid chain: tRNA pseudouridine synthase B (312 aa).

Asp49 acts as the Nucleophile in catalysis.

Belongs to the pseudouridine synthase TruB family. Type 1 subfamily.

The catalysed reaction is uridine(55) in tRNA = pseudouridine(55) in tRNA. Responsible for synthesis of pseudouridine from uracil-55 in the psi GC loop of transfer RNAs. In Chelativorans sp. (strain BNC1), this protein is tRNA pseudouridine synthase B.